A 371-amino-acid polypeptide reads, in one-letter code: Aminomethyltransferase (371 aa).

The protein belongs to the GcvT family. The glycine cleavage system is composed of four proteins: P, T, L and H.

The enzyme catalyses N(6)-[(R)-S(8)-aminomethyldihydrolipoyl]-L-lysyl-[protein] + (6S)-5,6,7,8-tetrahydrofolate = N(6)-[(R)-dihydrolipoyl]-L-lysyl-[protein] + (6R)-5,10-methylene-5,6,7,8-tetrahydrofolate + NH4(+). In terms of biological role, the glycine cleavage system catalyzes the degradation of glycine. The polypeptide is Aminomethyltransferase (Leptospira interrogans serogroup Icterohaemorrhagiae serovar Lai (strain 56601)).